A 195-amino-acid chain; its full sequence is Adenylate kinase (195 aa).

Residue 11 to 16 coordinates ATP; that stretch reads GAGKGT. The tract at residues 31 to 60 is NMP; it reads STGDIFRAAVRNQTPLGQQVQAYLDSGRLV. AMP contacts are provided by residues threonine 32, arginine 37, 58 to 60, 86 to 89, and glutamine 93; these read RLV and GFPR. The tract at residues 127–137 is LID; that stretch reads LRAEKESRKDD. Residue arginine 128 coordinates ATP. Arginine 134 and arginine 145 together coordinate AMP. Glutamine 173 serves as a coordination point for ATP.

This sequence belongs to the adenylate kinase family. Monomer.

The protein localises to the cytoplasm. It carries out the reaction AMP + ATP = 2 ADP. Its pathway is purine metabolism; AMP biosynthesis via salvage pathway; AMP from ADP: step 1/1. In terms of biological role, catalyzes the reversible transfer of the terminal phosphate group between ATP and AMP. Plays an important role in cellular energy homeostasis and in adenine nucleotide metabolism. This is Adenylate kinase from Cyanothece sp. (strain PCC 7425 / ATCC 29141).